Here is a 226-residue protein sequence, read N- to C-terminus: Leucyl/phenylalanyl-tRNA--protein transferase (226 aa).

Belongs to the L/F-transferase family.

It localises to the cytoplasm. It catalyses the reaction N-terminal L-lysyl-[protein] + L-leucyl-tRNA(Leu) = N-terminal L-leucyl-L-lysyl-[protein] + tRNA(Leu) + H(+). The catalysed reaction is N-terminal L-arginyl-[protein] + L-leucyl-tRNA(Leu) = N-terminal L-leucyl-L-arginyl-[protein] + tRNA(Leu) + H(+). The enzyme catalyses L-phenylalanyl-tRNA(Phe) + an N-terminal L-alpha-aminoacyl-[protein] = an N-terminal L-phenylalanyl-L-alpha-aminoacyl-[protein] + tRNA(Phe). Functionally, functions in the N-end rule pathway of protein degradation where it conjugates Leu, Phe and, less efficiently, Met from aminoacyl-tRNAs to the N-termini of proteins containing an N-terminal arginine or lysine. This chain is Leucyl/phenylalanyl-tRNA--protein transferase, found in Pseudomonas fluorescens (strain SBW25).